The sequence spans 300 residues: 33 kDa chaperonin (300 aa).

2 disulfides stabilise this stretch: C247–C249 and C280–C283.

The protein belongs to the HSP33 family. In terms of processing, under oxidizing conditions two disulfide bonds are formed involving the reactive cysteines. Under reducing conditions zinc is bound to the reactive cysteines and the protein is inactive.

Its subcellular location is the cytoplasm. Its function is as follows. Redox regulated molecular chaperone. Protects both thermally unfolding and oxidatively damaged proteins from irreversible aggregation. Plays an important role in the bacterial defense system toward oxidative stress. In Prochlorococcus marinus subsp. pastoris (strain CCMP1986 / NIES-2087 / MED4), this protein is 33 kDa chaperonin.